We begin with the raw amino-acid sequence, 533 residues long: MADTIPHNTFDTILVLDFGSQYTHLITRRLREINVYSEMLPCTQKLADLGWKPKGIILSGGPYSVYEEGAPHADPAFFELGVPILGICYGLQELAHRLHADNVVAGTAREYGHADLKATKFGGHVDKLFENIEGDMTVWMSHGDKLRNLPEGFHTIGTTQNSEYAAIAHKSDPIYGIQFHPEVTHTPQGGQLLKNFAVGICGAEQKWTMAEFIGQEIQRIRSLVGPDGQVLGAVSGGVDSTVAAKLMTEAIGDRFHAVLVDNGCMRLNECEKVQEVLQEQLGINLTVVDAGEQFLAGLKGVHDPEQKRKFIGGKFIDVFEDEARKIEAKSNGKVEWFLQGTLYPDVIESISFKGPSQTIKTHHNVGGIAERLMRGHGLKLIEPLRELFKDEVRELGRQLGISPELVGRHPFPGPGIAIRVLGEVTREKVEMARQADHIFISMIREAGIYDEIGQAYAALDPSRAVGVMGDKRVYANIILLRAISTKDFMTATPYPFSYEFLSKVSTRIVNEVAGVCRVCYDYTSKPPGTIEME.

A Glutamine amidotransferase type-1 domain is found at 12 to 206 (TILVLDFGSQ…AVGICGAEQK (195 aa)). Cys-88 functions as the Nucleophile in the catalytic mechanism. Active-site residues include His-180 and Glu-182. The GMPS ATP-PPase domain maps to 207–408 (WTMAEFIGQE…LGISPELVGR (202 aa)). 235 to 241 (SGGVDST) serves as a coordination point for ATP. The XMP site is built by Arg-308, Asp-470, Lys-525, and Glu-531.

In terms of assembly, homodimer. Mg(2+) serves as cofactor.

It is found in the cytoplasm. The protein resides in the cytosol. The enzyme catalyses XMP + L-glutamine + ATP + H2O = GMP + L-glutamate + AMP + diphosphate + 2 H(+). It functions in the pathway purine metabolism; GMP biosynthesis; GMP from XMP (L-Gln route): step 1/1. Its function is as follows. Catalyzes the conversion of xanthine monophosphate (XMP) to GMP in the presence of glutamine and ATP through an adenyl-XMP intermediate. In Emericella nidulans (strain FGSC A4 / ATCC 38163 / CBS 112.46 / NRRL 194 / M139) (Aspergillus nidulans), this protein is GMP synthase [glutamine-hydrolyzing] (gua1).